A 376-amino-acid chain; its full sequence is Glucose-1-phosphate adenylyltransferase (376 aa).

Alpha-D-glucose 1-phosphate is bound by residues Tyr101, Gly166, 181-182 (EK), and Ser192.

This sequence belongs to the bacterial/plant glucose-1-phosphate adenylyltransferase family. Homotetramer.

It catalyses the reaction alpha-D-glucose 1-phosphate + ATP + H(+) = ADP-alpha-D-glucose + diphosphate. Its pathway is glycan biosynthesis; glycogen biosynthesis. Functionally, involved in the biosynthesis of ADP-glucose, a building block required for the elongation reactions to produce glycogen. Catalyzes the reaction between ATP and alpha-D-glucose 1-phosphate (G1P) to produce pyrophosphate and ADP-Glc. This chain is Glucose-1-phosphate adenylyltransferase, found in Bacillus cereus (strain Q1).